Here is a 445-residue protein sequence, read N- to C-terminus: Adenylosuccinate synthetase (445 aa).

GTP-binding positions include 12–18 and 40–42; these read GDEGKGK and GHT. The Proton acceptor role is filled by aspartate 13. Mg(2+) is bound by residues aspartate 13 and glycine 40. Residues 13-16, 38-41, threonine 128, arginine 142, glutamine 223, threonine 238, and arginine 302 contribute to the IMP site; these read DEGK and NAGH. Catalysis depends on histidine 41, which acts as the Proton donor. Substrate is bound at residue 298–304; it reads TTTGRKR. Residues arginine 304, 330–332, and 411–413 each bind GTP; these read KLD and SLG.

This sequence belongs to the adenylosuccinate synthetase family. As to quaternary structure, homodimer. It depends on Mg(2+) as a cofactor.

The protein resides in the cytoplasm. The enzyme catalyses IMP + L-aspartate + GTP = N(6)-(1,2-dicarboxyethyl)-AMP + GDP + phosphate + 2 H(+). It participates in purine metabolism; AMP biosynthesis via de novo pathway; AMP from IMP: step 1/2. Functionally, plays an important role in the de novo pathway of purine nucleotide biosynthesis. Catalyzes the first committed step in the biosynthesis of AMP from IMP. The polypeptide is Adenylosuccinate synthetase (Cyanothece sp. (strain PCC 7425 / ATCC 29141)).